Here is a 334-residue protein sequence, read N- to C-terminus: Large ribosomal subunit protein uL3 (334 aa).

Over residues 1-10 the composition is skewed to basic residues; the sequence is MGMKKNRPRR. A disordered region spans residues 1 to 21; the sequence is MGMKKNRPRRGSLAFSPRKRA.

This sequence belongs to the universal ribosomal protein uL3 family. Part of the 50S ribosomal subunit. Forms a cluster with proteins L14 and L24e.

Its function is as follows. One of the primary rRNA binding proteins, it binds directly near the 3'-end of the 23S rRNA, where it nucleates assembly of the 50S subunit. This is Large ribosomal subunit protein uL3 from Methanococcus vannielii (strain ATCC 35089 / DSM 1224 / JCM 13029 / OCM 148 / SB).